The following is a 228-amino-acid chain: Cytidylate kinase (228 aa).

Residue 12-20 coordinates ATP; the sequence is GPSGAGKGT.

Belongs to the cytidylate kinase family. Type 1 subfamily.

The protein localises to the cytoplasm. The catalysed reaction is CMP + ATP = CDP + ADP. It catalyses the reaction dCMP + ATP = dCDP + ADP. The protein is Cytidylate kinase of Photobacterium profundum (strain SS9).